The sequence spans 246 residues: Exosome complex component SKI6 (246 aa).

It belongs to the RNase PH family. Component of the RNA exosome complex. Specifically part of the catalytically inactive RNA exosome core complex (Exo-9) which may associate with the catalytic subunits RRP6 and DIS3 in cytoplasmic- and nuclear-specific RNA exosome complex forms. Exo-9 is formed by a hexameric base ring of RNase PH domain-containing subunits and a cap ring consisting of CSL4, RRP4 and RRP40.

It localises to the cytoplasm. Its subcellular location is the nucleus. It is found in the nucleolus. In terms of biological role, non-catalytic component of the RNA exosome complex which has 3'-&gt;5' exoribonuclease activity and participates in a multitude of cellular RNA processing and degradation events. In the nucleus, the RNA exosome complex is involved in proper maturation of stable RNA species such as rRNA, snRNA and snoRNA, in the elimination of RNA processing by-products and non-coding 'pervasive' transcripts, such as antisense RNA species and cryptic unstable transcripts (CUTs), and of mRNAs with processing defects, thereby limiting or excluding their export to the cytoplasm. In the cytoplasm, the RNA exosome complex is involved in general mRNA turnover and in RNA surveillance pathways, preventing translation of aberrant mRNAs. The catalytic inactive RNA exosome core complex of 9 subunits (Exo-9) is proposed to play a pivotal role in the binding and presentation of RNA for ribonucleolysis, and to serve as a scaffold for the association with catalytic subunits and accessory proteins or complexes. SKI6 is part of the hexameric ring of RNase PH domain-containing subunits proposed to form a central channel which threads RNA substrates for degradation. In Saccharomyces cerevisiae (strain ATCC 204508 / S288c) (Baker's yeast), this protein is Exosome complex component SKI6 (SKI6).